The chain runs to 256 residues: Pimeloyl-[acyl-carrier protein] methyl ester esterase (256 aa).

Residues 15–242 (HLVLLHGWGL…AAHAPFISHP (228 aa)) form the AB hydrolase-1 domain. Residues Trp22, 82-83 (SL), and 143-147 (FLALQ) contribute to the substrate site. The active-site Nucleophile is Ser82. Residues Asp207 and His235 contribute to the active site. His235 is a binding site for substrate.

It belongs to the AB hydrolase superfamily. Carboxylesterase BioH family. In terms of assembly, monomer.

The protein resides in the cytoplasm. The catalysed reaction is 6-carboxyhexanoyl-[ACP] methyl ester + H2O = 6-carboxyhexanoyl-[ACP] + methanol + H(+). It participates in cofactor biosynthesis; biotin biosynthesis. Its function is as follows. The physiological role of BioH is to remove the methyl group introduced by BioC when the pimeloyl moiety is complete. It allows to synthesize pimeloyl-ACP via the fatty acid synthetic pathway through the hydrolysis of the ester bonds of pimeloyl-ACP esters. The protein is Pimeloyl-[acyl-carrier protein] methyl ester esterase of Escherichia coli O45:K1 (strain S88 / ExPEC).